A 355-amino-acid polypeptide reads, in one-letter code: Peptide chain release factor 1 (355 aa).

The residue at position 231 (glutamine 231) is an N5-methylglutamine. Basic and acidic residues predominate over residues 280-291; sequence SERLAKESEARK. The segment at 280–303 is disordered; sequence SERLAKESEARKSQVGSGDRSERI.

The protein belongs to the prokaryotic/mitochondrial release factor family. Methylated by PrmC. Methylation increases the termination efficiency of RF1.

The protein resides in the cytoplasm. Peptide chain release factor 1 directs the termination of translation in response to the peptide chain termination codons UAG and UAA. This is Peptide chain release factor 1 from Campylobacter jejuni (strain RM1221).